Reading from the N-terminus, the 507-residue chain is WD repeat-containing protein fzy-1 (507 aa).

Disordered stretches follow at residues 1–39 and 74–95; these read MNNKGRTPGSAGRTVRSSAQQNGLTMRKRDMTPTRNTNL and NKENLNNSMSEPNSPEKKSVEG. Composition is skewed to polar residues over residues 15–24 and 74–86; these read VRSSAQQNGL and NKENLNNSMSEPN. WD repeat units follow at residues 219-258, 313-352, 364-406, and 411-450; these read TNEGLITSVRWSQEGRYISLGYASGAVKIYDPNRPKTTEY, GHCRDVTALEWSADENMCVSGSSDRTAKIWDGRHVRGSTV, EHTG…QKVR, and CETGGVGGIVFNRPYSEMLTASDDGFLRIYRFNANYKLSH.

This sequence belongs to the WD repeat CDC20/Fizzy family.

The protein localises to the chromosome. Its subcellular location is the cytoplasm. In terms of biological role, plays a role in metaphase-anaphase transition during meiosis I. Required for embryonic anterior-posterior axis formation. In Caenorhabditis elegans, this protein is WD repeat-containing protein fzy-1.